The primary structure comprises 928 residues: DNA ligase 4 (928 aa).

ATP-binding residues include glutamate 302, lysine 304, arginine 309, glutamate 362, phenylalanine 409, glutamate 469, lysine 474, lysine 492, and lysine 494. The active-site N6-AMP-lysine intermediate is the lysine 304. Glutamate 362 lines the Mg(2+) pocket. Glutamate 469 provides a ligand contact to Mg(2+). 2 consecutive BRCT domains span residues 673–769 (VESD…PYFI) and 821–927 (PWIY…DYKF).

This sequence belongs to the ATP-dependent DNA ligase family. Mg(2+) serves as cofactor.

It is found in the nucleus. The enzyme catalyses ATP + (deoxyribonucleotide)n-3'-hydroxyl + 5'-phospho-(deoxyribonucleotide)m = (deoxyribonucleotide)n+m + AMP + diphosphate.. Its function is as follows. DNA ligase involved in DNA non-homologous end joining (NHEJ); required for double-strand break (DSB) repair. Not required for the repair of DSBs induced by ionizing radiation or UV light. Has an important role in morphogenesis, positively affecting the capacity to form hyphae. This chain is DNA ligase 4 (LIG4), found in Candida albicans (strain SC5314 / ATCC MYA-2876) (Yeast).